A 548-amino-acid chain; its full sequence is MKNINPSQTAAWKALQQHFEQMKDVTISSLFAKDDQRFNQFSATFDDQMLVDFSKNRITRETMEKLQALAKETDLAGAIKAMFSGEKINRTEDRAVLHIALRNRSNTPIVVDGKDVMPEVNAVLAKMKQFCDRVIGGEWKGYTGKAITDVVNIGIGGSDLGPYMVTEALRPYKNHLNMHFVSNVDGTHIAETLKPLNPETTLFLVASKTFTTQETMTNAHSARDWFLSTASDEKHVAKHFAALSTNAKAVGEFGIDTNNMFEFWDWVGGRYSLWSAIGLSIALSVGFENFEQLLSGAHAMDKHFAETPAEKNLPILLALIGIWYNNFFGAETEAILPYDQYMHRFPAYFQQGNMESNGKYVGRDGKPVDYQTGPIIWGEPGTNGQHAFYQLIHQGTKLVPCDFIAPAISHNPLSDHHAKLLSNFFAQTEALAFGKSLAEVEAEFAATGKTPEQVAHVAPFKVFEGNRPTNSILLREITPFSLGALIALYEHKIFTQGVILNIYSFDQWGVELGKQLANRILPELAGDEKVTSHDSSTNALINRFKSWR.

E355 serves as the catalytic Proton donor. Active-site residues include H386 and K514.

The protein belongs to the GPI family.

It is found in the cytoplasm. It carries out the reaction alpha-D-glucose 6-phosphate = beta-D-fructose 6-phosphate. The protein operates within carbohydrate biosynthesis; gluconeogenesis. It functions in the pathway carbohydrate degradation; glycolysis; D-glyceraldehyde 3-phosphate and glycerone phosphate from D-glucose: step 2/4. Its function is as follows. Catalyzes the reversible isomerization of glucose-6-phosphate to fructose-6-phosphate. The chain is Glucose-6-phosphate isomerase from Yersinia enterocolitica serotype O:8 / biotype 1B (strain NCTC 13174 / 8081).